A 1313-amino-acid polypeptide reads, in one-letter code: Mitogen-activated protein kinase kinase kinase 15 (1313 aa).

The disordered stretch occupies residues 1-58; that stretch reads MESGGGNAPAGALGAASESPQCPPPPGVEGAAGPAEPDGAAEGAAGGSGEGESGGGPR. Positions 28–43 are enriched in low complexity; the sequence is VEGAAGPAEPDGAAEG. Over residues 44–57 the composition is skewed to gly residues; that stretch reads AAGGSGEGESGGGP. Positions 652–908 constitute a Protein kinase domain; that stretch reads NGERVVLGKG…TAELLREGFL (257 aa). ATP is bound by residues 658–666 and Lys-681; that span reads LGKGTYGIV. Asp-773 serves as the catalytic Proton acceptor. Residues 939–958 form a disordered region; the sequence is EPMATSSSEHGSVSPDSDAQ. The segment covering 942–955 has biased composition (polar residues); it reads ATSSSEHGSVSPDS. Ser-994 carries the post-translational modification Phosphoserine. Positions 1179-1225 form a coiled coil; sequence QLGELRQETNRLLEHLVEKEREYQNLLRQTLEQKTQELYHLQLKLKS.

Belongs to the protein kinase superfamily. STE Ser/Thr protein kinase family. MAP kinase kinase kinase subfamily. Mg(2+) is required as a cofactor. As to expression, isoform 2 and isoform 3 are widely expressed. Isoform 2 highest levels are observed in fetal brain, and isoform 3 highest levels in pancreas, peripheral blood leukocytes, fetal brain and spleen.

It carries out the reaction L-seryl-[protein] + ATP = O-phospho-L-seryl-[protein] + ADP + H(+). The catalysed reaction is L-threonyl-[protein] + ATP = O-phospho-L-threonyl-[protein] + ADP + H(+). Contains an N-terminal autoinhibitory domain. Activated by phosphorylation at Thr-812, inhibited by phosphorylation at Ser-924 and Ser-994. Functionally, serine/threonine kinase which acts as a component of the MAP kinase signal transduction pathway. Once activated, acts as an upstream activator of the p38 MAPK signal transduction cascade through the phosphorylation and activation of several MAP kinase kinases. May function in a signal transduction pathway that is activated by various cell stresses and leads to apoptosis. Involved in phosphorylation of WNK4 in response to osmotic stress or hypotonic low-chloride stimulation via the p38 MAPK signal transduction cascade. The protein is Mitogen-activated protein kinase kinase kinase 15 (MAP3K15) of Homo sapiens (Human).